The following is a 456-amino-acid chain: Gamma-aminobutyric acid receptor subunit alpha-1 (456 aa).

Positions Met-1 to Gly-27 are cleaved as a signal peptide. Topologically, residues Gln-28 to Phe-253 are extracellular. N-linked (GlcNAc...) asparagine glycosylation occurs at Asn-38. Residue Arg-94 participates in 4-aminobutanoate binding. Residue Asn-138 is glycosylated (N-linked (GlcNAc...) asparagine). Residue Thr-157 coordinates 4-aminobutanoate. A disulfide bond links Cys-166 and Cys-180. The chain crosses the membrane as a helical span at residues Val-254–Leu-274. At Asn-275–Val-279 the chain is on the cytoplasmic side. Residues Pro-280 to Arg-301 traverse the membrane as a helical segment. Over Asn-302–Thr-311 the chain is Extracellular. The chain crosses the membrane as a helical span at residues Ala-312–Thr-333. Residues Val-334 to Arg-421 lie on the Cytoplasmic side of the membrane. A helical membrane pass occupies residues Leu-422 to Thr-441. Topologically, residues Tyr-442 to Gln-456 are extracellular.

It belongs to the ligand-gated ion channel (TC 1.A.9) family. Gamma-aminobutyric acid receptor (TC 1.A.9.5) subfamily. GABRA1 sub-subfamily. In terms of assembly, heteropentamer, formed by a combination of alpha (GABRA1-6), beta (GABRB1-3), gamma (GABRG1-3), delta (GABRD), epsilon (GABRE), rho (GABRR1-3), pi (GABRP) and theta (GABRQ) subunits, each subunit exhibiting distinct physiological and pharmacological properties. Interacts with UBQLN1. Interacts with TRAK1. Interacts with KIF21B. Identified in a complex of 720 kDa composed of LHFPL4, NLGN2, GABRA1, GABRB2, GABRG2 and GABRB3. Interacts with LHFPL4. Interacts with NLGN2. Interacts with SHISA7; interaction leads to the regulation of GABA(A) receptor trafficking, channel deactivation kinetics and pharmacology.

It is found in the postsynaptic cell membrane. It localises to the cell membrane. The protein resides in the cytoplasmic vesicle membrane. The enzyme catalyses chloride(in) = chloride(out). With respect to regulation, allosterically activated by benzodiazepines, the neuroanesthetic alphaxalone and pentobarbital. Inhibited by the antagonist bicuculline. Potentiated by histamine. Its function is as follows. Alpha subunit of the heteropentameric ligand-gated chloride channel gated by gamma-aminobutyric acid (GABA), a major inhibitory neurotransmitter in the brain. GABA-gated chloride channels, also named GABA(A) receptors (GABAAR), consist of five subunits arranged around a central pore and contain GABA active binding site(s) located at the alpha and beta subunit interface(s). When activated by GABA, GABAARs selectively allow the flow of chloride anions across the cell membrane down their electrochemical gradient. Alpha-1/GABRA1-containing GABAARs are largely synaptic. Chloride influx into the postsynaptic neuron following GABAAR opening decreases the neuron ability to generate a new action potential, thereby reducing nerve transmission. GABAARs containing alpha-1 and beta-2 or -3 subunits exhibit synaptogenic activity; the gamma-2 subunit being necessary but not sufficient to induce rapid synaptic contacts formation. GABAARs function also as histamine receptor where histamine binds at the interface of two neighboring beta subunits and potentiates GABA response. GABAARs containing alpha, beta and epsilon subunits also permit spontaneous chloride channel activity while preserving the structural information required for GABA-gated openings. Alpha-1-mediated plasticity in the orbitofrontal cortex regulates context-dependent action selection. Together with rho subunits, may also control neuronal and glial GABAergic transmission in the cerebellum. The chain is Gamma-aminobutyric acid receptor subunit alpha-1 (GABRA1) from Macaca fascicularis (Crab-eating macaque).